The chain runs to 465 residues: Iron-sulfur cluster assembly SufBD family protein SSP1857 (465 aa).

Belongs to the iron-sulfur cluster assembly SufBD family.

The chain is Iron-sulfur cluster assembly SufBD family protein SSP1857 from Staphylococcus saprophyticus subsp. saprophyticus (strain ATCC 15305 / DSM 20229 / NCIMB 8711 / NCTC 7292 / S-41).